Reading from the N-terminus, the 244-residue chain is Orotidine 5'-phosphate decarboxylase (244 aa).

Substrate contacts are provided by residues aspartate 18, lysine 43, 73–82, serine 130, 182–192, glycine 206, and arginine 207; these read DLKLADIGYI and PGVGAQGGKPG. Lysine 75 acts as the Proton donor in catalysis.

Belongs to the OMP decarboxylase family. Type 1 subfamily. As to quaternary structure, homodimer.

The catalysed reaction is orotidine 5'-phosphate + H(+) = UMP + CO2. It participates in pyrimidine metabolism; UMP biosynthesis via de novo pathway; UMP from orotate: step 2/2. Its function is as follows. Catalyzes the decarboxylation of orotidine 5'-monophosphate (OMP) to uridine 5'-monophosphate (UMP). The polypeptide is Orotidine 5'-phosphate decarboxylase (Aeropyrum pernix (strain ATCC 700893 / DSM 11879 / JCM 9820 / NBRC 100138 / K1)).